The following is a 314-amino-acid chain: Putative S-adenosyl-L-methionine-dependent methyltransferase MAV_0301 (314 aa).

Residues Asp-132 and 161–162 (DL) contribute to the S-adenosyl-L-methionine site.

Belongs to the UPF0677 family.

Exhibits S-adenosyl-L-methionine-dependent methyltransferase activity. This Mycobacterium avium (strain 104) protein is Putative S-adenosyl-L-methionine-dependent methyltransferase MAV_0301.